We begin with the raw amino-acid sequence, 325 residues long: MSWITPELIEILLTILKAVVILLVVVTCGAFMSFGERRLLGLFQNRYGPNRVGWGGSLQLVADMIKMFFKEDWIPKFSDRVIFTLAPMIAFTSLLLAFAIVPVSPGWVVADLNIGILFFLMMAGLAVYAVLFAGWSSNNKYSLLGAMRASAQTLSYEVFLGLSLMGVVAQAGSFNMTDIVNSQAHVWNVIPQFFGFITFAIAGVAVCHRHPFDQPEAEQELADGYHIEYSGMKFGLFFVGEYIGIVTISALMVTLFFGGWQGPLLPPFIWFALKTAFFMMMFILIRASLPRPRYDQVMSFGWKICLPLTLINLLVTAAVILWQAQ.

The next 8 membrane-spanning stretches (helical) occupy residues 11-31 (ILLTILKAVVILLVVVTCGAF), 81-101 (VIFTLAPMIAFTSLLLAFAIV), 114-134 (IGILFFLMMAGLAVYAVLFAG), 154-174 (LSYEVFLGLSLMGVVAQAGSF), 186-206 (VWNVIPQFFGFITFAIAGVAV), 237-257 (FFVGEYIGIVTISALMVTLFF), 265-285 (LPPFIWFALKTAFFMMMFILI), and 304-324 (ICLPLTLINLLVTAAVILWQA).

It belongs to the complex I subunit 1 family. In terms of assembly, NDH-1 is composed of 13 different subunits. Subunits NuoA, H, J, K, L, M, N constitute the membrane sector of the complex.

Its subcellular location is the cell inner membrane. The catalysed reaction is a quinone + NADH + 5 H(+)(in) = a quinol + NAD(+) + 4 H(+)(out). Its function is as follows. NDH-1 shuttles electrons from NADH, via FMN and iron-sulfur (Fe-S) centers, to quinones in the respiratory chain. The immediate electron acceptor for the enzyme in this species is believed to be ubiquinone. Couples the redox reaction to proton translocation (for every two electrons transferred, four hydrogen ions are translocated across the cytoplasmic membrane), and thus conserves the redox energy in a proton gradient. This subunit may bind ubiquinone. This chain is NADH-quinone oxidoreductase subunit H, found in Escherichia coli O7:K1 (strain IAI39 / ExPEC).